The chain runs to 274 residues: Glutamate racemase (274 aa).

Substrate is bound by residues 10–11 (DS) and 42–43 (YG). Residue C73 is the Proton donor/acceptor of the active site. 74–75 (NT) contributes to the substrate binding site. The active-site Proton donor/acceptor is the C184. Position 185 to 186 (185 to 186 (TH)) interacts with substrate.

The protein belongs to the aspartate/glutamate racemases family.

The enzyme catalyses L-glutamate = D-glutamate. Its pathway is cell wall biogenesis; peptidoglycan biosynthesis. Functionally, provides the (R)-glutamate required for cell wall biosynthesis. This chain is Glutamate racemase, found in Latilactobacillus sakei subsp. sakei (strain 23K) (Lactobacillus sakei subsp. sakei).